The primary structure comprises 443 residues: MFLAQEIIRKKRNGLALSSEEIQFFVQGITTNSVSEGQIAALGMAVYFNDMNMDERIALTTAMRDSGTVLNWQSLGLNGPVIDKHSTGGVGDVISLMLGPMAAACGGYVPMISGRGLGHTGGTLDKFDAIQGYQTEPSSELFRKVVKEVGVAIIGQTGDLVPADKRFYSIRDNTATVESISLITASILSKKLACNLDALAMDVKVGSGAFMPTYEASEELARSIAAVANGAGTKTTALLTDMNQVLASCAGNAVEVKEAIDFLTGAYRNPRLYEVTMGLCAEMLLLGGLASNEADARAKLNRVLDNGRAAELFGKMVSGLGGPVDFVENYSKYLPQSQIIRPVFADMQGYAYSMDTRELGLAVVTLGGGRRKPGDALDYSVGLTQVCALGDKVDSSTPIAVIHAQSEAAFAEAELAVKKAIHIGETAPEKTPEIYAYIRASDL.

This sequence belongs to the thymidine/pyrimidine-nucleoside phosphorylase family. As to quaternary structure, homodimer.

It carries out the reaction thymidine + phosphate = 2-deoxy-alpha-D-ribose 1-phosphate + thymine. It functions in the pathway pyrimidine metabolism; dTMP biosynthesis via salvage pathway; dTMP from thymine: step 1/2. The enzymes which catalyze the reversible phosphorolysis of pyrimidine nucleosides are involved in the degradation of these compounds and in their utilization as carbon and energy sources, or in the rescue of pyrimidine bases for nucleotide synthesis. In Shewanella baltica (strain OS185), this protein is Thymidine phosphorylase.